A 154-amino-acid polypeptide reads, in one-letter code: Avirulence protein ATR13 (154 aa).

A signal peptide spans 1–19 (MRLVHAVLLPGIIVFVSNG). The RxLR motif lies at 38–41 (RQLR). The interval 50–92 (LSRASFGLGKAQDPLDKFFSKIIFSGKPIETSYSAKGIHEKII) is leucine heptad repeat region. The segment at 93-103 (EAHDLHVSKSK) is single repeat region. Residues 104-154 (NAPIQYASVMEYLKKTYPGPDIERIVSTLERHDEVGAKDLGAKLRDALDRQ) are highly variable C-terminus domain.

Belongs to the RxLR effector family.

The protein localises to the secreted. The protein resides in the host cytoplasm. In terms of biological role, secreted effector that acts as an elicitor of hypersensitive response (HR) specifically on plants carrying defense protein RPP13. Recognition of ATR13 by RPP13 initiates defense responses that are effective against oomycete, bacterial and viral pathogens. The allele ATR13-Emco5 recognizes RPP13-Nd, the RPP13 defense protein from Arabidopsis thaliana ecotype Niederzenz. The protein is Avirulence protein ATR13 of Hyaloperonospora arabidopsidis (Peronospora arabidopsidis).